Consider the following 334-residue polypeptide: PDZ domain-containing protein MAGIX (334 aa).

Basic and acidic residues-rich tracts occupy residues 1 to 13 and 209 to 224; these read MEPRTGDAADPRG and LETHPGKPRGVGEPRK. Disordered stretches follow at residues 1-26 and 209-306; these read MEPRTGDAADPRGSRGGRGPSPLAGP and LETH…WLVP. Positions 125 to 209 constitute a PDZ domain; that stretch reads SVELVRGYAG…QLHLVIRRPL (85 aa). Residues 244–260 show a composition bias toward polar residues; sequence GSRSSSTSLVQHPPSRT. Phosphoserine is present on S272.

The protein is PDZ domain-containing protein MAGIX (MAGIX) of Homo sapiens (Human).